A 441-amino-acid polypeptide reads, in one-letter code: Amino-acid acetyltransferase (441 aa).

The region spanning 295–434 is the N-acetyltransferase domain; it reads EQVRRATIND…QELYNYQRRS (140 aa).

This sequence belongs to the acetyltransferase family. ArgA subfamily. In terms of assembly, homohexamer.

Its subcellular location is the cytoplasm. The catalysed reaction is L-glutamate + acetyl-CoA = N-acetyl-L-glutamate + CoA + H(+). It functions in the pathway amino-acid biosynthesis; L-arginine biosynthesis; N(2)-acetyl-L-ornithine from L-glutamate: step 1/4. In Yersinia pseudotuberculosis serotype O:1b (strain IP 31758), this protein is Amino-acid acetyltransferase.